A 79-amino-acid polypeptide reads, in one-letter code: Putative membrane protein insertion efficiency factor (79 aa).

The protein belongs to the UPF0161 family.

Its subcellular location is the cell inner membrane. Its function is as follows. Could be involved in insertion of integral membrane proteins into the membrane. The polypeptide is Putative membrane protein insertion efficiency factor (Synechocystis sp. (strain ATCC 27184 / PCC 6803 / Kazusa)).